Consider the following 65-residue polypeptide: Large ribosomal subunit protein bL35 (65 aa).

Residues 1-26 form a disordered region; it reads MPKMKTNRASAKRFKKTASGGFKAGQ.

Belongs to the bacterial ribosomal protein bL35 family.

The sequence is that of Large ribosomal subunit protein bL35 from Oenococcus oeni (strain ATCC BAA-331 / PSU-1).